Reading from the N-terminus, the 256-residue chain is Pimeloyl-[acyl-carrier protein] methyl ester esterase (256 aa).

An AB hydrolase-1 domain is found at 15 to 242; the sequence is HLVLLHGWGL…AAHAPFISHP (228 aa). Substrate contacts are provided by residues tryptophan 22, 82–83, and 143–147; these read SL and FLALQ. The active-site Nucleophile is the serine 82. Residues aspartate 207 and histidine 235 contribute to the active site. Position 235 (histidine 235) interacts with substrate.

Belongs to the AB hydrolase superfamily. Carboxylesterase BioH family. As to quaternary structure, monomer.

Its subcellular location is the cytoplasm. The enzyme catalyses 6-carboxyhexanoyl-[ACP] methyl ester + H2O = 6-carboxyhexanoyl-[ACP] + methanol + H(+). It participates in cofactor biosynthesis; biotin biosynthesis. In terms of biological role, the physiological role of BioH is to remove the methyl group introduced by BioC when the pimeloyl moiety is complete. It allows to synthesize pimeloyl-ACP via the fatty acid synthetic pathway through the hydrolysis of the ester bonds of pimeloyl-ACP esters. The protein is Pimeloyl-[acyl-carrier protein] methyl ester esterase of Escherichia coli O127:H6 (strain E2348/69 / EPEC).